Consider the following 201-residue polypeptide: Small ribosomal subunit protein uS4c (201 aa).

A disordered region spans residues 15–44 (LGALPGLTNKRPRAGSDLRNQSRSGKKSQY). In terms of domain architecture, S4 RNA-binding spans 89–150 (MRLDNILFRL…EQKSKVLIQN (62 aa)).

This sequence belongs to the universal ribosomal protein uS4 family. Part of the 30S ribosomal subunit. Contacts protein S5. The interaction surface between S4 and S5 is involved in control of translational fidelity.

The protein localises to the plastid. The protein resides in the chloroplast. Functionally, one of the primary rRNA binding proteins, it binds directly to 16S rRNA where it nucleates assembly of the body of the 30S subunit. In terms of biological role, with S5 and S12 plays an important role in translational accuracy. This chain is Small ribosomal subunit protein uS4c (rps4), found in Lactuca sativa (Garden lettuce).